The primary structure comprises 365 residues: Glucose 1-dehydrogenase 1 (365 aa).

Position 38 (D38) interacts with Zn(2+). Substrate is bound at residue T40. The Zn(2+) site is built by H63 and E64. The substrate site is built by E115 and E151. E151 contacts Zn(2+). Residues N182 to L185, R207 to R208, L272 to V274, and S301 to N303 contribute to the NADP(+) site. A substrate-binding site is contributed by N303.

It belongs to the zinc-containing alcohol dehydrogenase family. Glucose 1-dehydrogenase subfamily. Requires Zn(2+) as cofactor.

The catalysed reaction is D-glucose + NAD(+) = D-glucono-1,5-lactone + NADH + H(+). It carries out the reaction D-glucose + NADP(+) = D-glucono-1,5-lactone + NADPH + H(+). Functionally, catalyzes the NAD(P)(+)-dependent oxidation of D-glucose to D-gluconate via gluconolactone. Can utilize both NAD(+) and NADP(+) as electron acceptor. Is involved in the degradation of glucose through a modified Entner-Doudoroff pathway. This Haloterrigena turkmenica (strain ATCC 51198 / DSM 5511 / JCM 9101 / NCIMB 13204 / VKM B-1734 / 4k) (Halococcus turkmenicus) protein is Glucose 1-dehydrogenase 1.